A 189-amino-acid polypeptide reads, in one-letter code: UPF0301 protein RT0098 (189 aa).

It belongs to the UPF0301 (AlgH) family.

This Rickettsia typhi (strain ATCC VR-144 / Wilmington) protein is UPF0301 protein RT0098.